The following is a 628-amino-acid chain: Chaperone protein HtpG (628 aa).

The a; substrate-binding stretch occupies residues 1–337; sequence MSEKKYTFET…SADLPLNVSR (337 aa). A b region spans residues 338–554; the sequence is EILQHNKVID…DYGMSLHMQK (217 aa). Positions 555–628 are c; that stretch reads MMEEAGQSFM…FVKLVNKYIR (74 aa).

The protein belongs to the heat shock protein 90 family. As to quaternary structure, homodimer.

The protein localises to the cytoplasm. In terms of biological role, molecular chaperone. Has ATPase activity. The polypeptide is Chaperone protein HtpG (Francisella tularensis subsp. tularensis (strain WY96-3418)).